The sequence spans 648 residues: Probable ATP-dependent RNA helicase DDX43 (648 aa).

The interval 1–60 (MSHHGGAPKASTWVVASRRSSTVSRAPERRPAEELNRTGPEGYSVGRGGRWRGTSRPPEA) is disordered. Low complexity predominate over residues 10–25 (ASTWVVASRRSSTVSR). Over residues 26-36 (APERRPAEELN) the composition is skewed to basic and acidic residues. The KH domain occupies 67 to 128 (ELPLCFALKS…AMQTKAKAVI (62 aa)). The short motif at 242 to 270 (TFDDAFQCYPEVMENIKKAGFQKPTPIQS) is the Q motif element. A Helicase ATP-binding domain is found at 273–448 (WPIVLQGIDL…QSYLKEPMIV (176 aa)). Residue 286 to 293 (AQTGTGKT) participates in ATP binding. Positions 396 to 399 (DEAD) match the DEAD box motif. Residues 460–621 (SVKQNIIVTT…SIPEELVSMA (162 aa)) form the Helicase C-terminal domain. A compositionally biased stretch (basic and acidic residues) spans 628 to 641 (QQKREMERKMERPQ). Residues 628 to 648 (QQKREMERKMERPQGRPKKFH) are disordered.

Belongs to the DEAD box helicase family. In terms of tissue distribution, expressed in testis. Expressed in many tumors of various histological types at a level that is 100-fold higher than the level observed in normal tissues except testis.

The enzyme catalyses ATP + H2O = ADP + phosphate + H(+). The chain is Probable ATP-dependent RNA helicase DDX43 (DDX43) from Homo sapiens (Human).